Consider the following 270-residue polypeptide: Endochitinase PR4 (270 aa).

An N-terminal signal peptide occupies residues 1-23 (MGNKLVLVLVAVALVMGPKNVSA). The region spanning 24-58 (QNCGCAEGLCCSQYGYCGTGEDYCGTGCQQGPCTT) is the Chitin-binding type-1 domain. Disulfide bonds link C26–C34, C28–C40, C33–C47, C51–C56, C88–C137, C150–C160, and C238–C270. E132 (proton donor) is an active-site residue.

The protein belongs to the glycosyl hydrolase 19 family. Chitinase class I subfamily.

It carries out the reaction Random endo-hydrolysis of N-acetyl-beta-D-glucosaminide (1-&gt;4)-beta-linkages in chitin and chitodextrins.. Defense against chitin-containing fungal pathogens. The polypeptide is Endochitinase PR4 (CHI4) (Phaseolus vulgaris (Kidney bean)).